The following is a 731-amino-acid chain: NADH-ubiquinone oxidoreductase 75 kDa subunit, mitochondrial (731 aa).

The N-terminal 27 residues, 1 to 27 (MIRAPLVKALGALGSPTHQMASRAVRT), are a transit peptide targeting the mitochondrion. The 2Fe-2S ferredoxin-type domain maps to 40 to 118 (EKIEVFVDDI…GWRIKTNSDL (79 aa)). [2Fe-2S] cluster is bound by residues Cys-74, Cys-85, Cys-88, and Cys-102. The 4Fe-4S His(Cys)3-ligated-type domain maps to 118–157 (LTRKAREGVMEFLLMNHPLDCPICDQGGECDLQDQAMAFG). Positions 134, 138, 141, 147, 190, 193, 196, and 240 each coordinate [4Fe-4S] cluster. Positions 259 to 315 (IRKVSSIDVLDAVGSNIVVSTRTNEVLRILPRENEDVNEEWLADKSRFACDGLKRQR) constitute a 4Fe-4S Mo/W bis-MGD-type domain.

This sequence belongs to the complex I 75 kDa subunit family. As to quaternary structure, complex I is composed of about 45 different subunits. [2Fe-2S] cluster is required as a cofactor. [4Fe-4S] cluster serves as cofactor.

It localises to the mitochondrion inner membrane. The catalysed reaction is a ubiquinone + NADH + 5 H(+)(in) = a ubiquinol + NAD(+) + 4 H(+)(out). In terms of biological role, core subunit of the mitochondrial membrane respiratory chain NADH dehydrogenase (Complex I) that is believed to belong to the minimal assembly required for catalysis. Complex I functions in the transfer of electrons from NADH to the respiratory chain. The immediate electron acceptor for the enzyme is believed to be ubiquinone. This is the largest subunit of complex I and it is a component of the iron-sulfur (IP) fragment of the enzyme. It may form part of the active site crevice where NADH is oxidized. This chain is NADH-ubiquinone oxidoreductase 75 kDa subunit, mitochondrial, found in Drosophila melanogaster (Fruit fly).